A 55-amino-acid polypeptide reads, in one-letter code: Large ribosomal subunit protein bL33 (55 aa).

Belongs to the bacterial ribosomal protein bL33 family.

The sequence is that of Large ribosomal subunit protein bL33 from Arthrobacter sp. (strain FB24).